The primary structure comprises 110 residues: Nucleoid-associated protein RALTA_A1934 (110 aa).

Positions 88–98 (TTQEKMGSMTS) are enriched in polar residues. The interval 88-110 (TTQEKMGSMTSGLPLPPGFKLPF) is disordered. Residues 101–110 (PLPPGFKLPF) show a composition bias toward pro residues.

This sequence belongs to the YbaB/EbfC family. Homodimer.

The protein resides in the cytoplasm. The protein localises to the nucleoid. Binds to DNA and alters its conformation. May be involved in regulation of gene expression, nucleoid organization and DNA protection. The polypeptide is Nucleoid-associated protein RALTA_A1934 (Cupriavidus taiwanensis (strain DSM 17343 / BCRC 17206 / CCUG 44338 / CIP 107171 / LMG 19424 / R1) (Ralstonia taiwanensis (strain LMG 19424))).